The primary structure comprises 504 residues: ATP synthase subunit alpha, chloroplastic (504 aa).

170-177 (GDRQTGKT) lines the ATP pocket.

The protein belongs to the ATPase alpha/beta chains family. F-type ATPases have 2 components, CF(1) - the catalytic core - and CF(0) - the membrane proton channel. CF(1) has five subunits: alpha(3), beta(3), gamma(1), delta(1), epsilon(1). CF(0) has four main subunits: a, b, b' and c.

It localises to the plastid. It is found in the chloroplast thylakoid membrane. The catalysed reaction is ATP + H2O + 4 H(+)(in) = ADP + phosphate + 5 H(+)(out). In terms of biological role, produces ATP from ADP in the presence of a proton gradient across the membrane. The alpha chain is a regulatory subunit. The chain is ATP synthase subunit alpha, chloroplastic from Triticum aestivum (Wheat).